We begin with the raw amino-acid sequence, 430 residues long: Pre-B-cell leukemia transcription factor 2 (430 aa).

Positions 1–52 (MDERLLGPPPPGGGRGGLGLVGAEPGGPGEPPGGGDPGGGSGGVPGGRGKQD) are disordered. The span at 13–48 (GGRGGLGLVGAEPGGPGEPPGGGDPGGGSGGVPGGR) shows a compositional bias: gly residues. Positions 48-243 (RGKQDIGDIL…VMILRSRFLD (196 aa)) constitute a PBC domain. Residues 55 to 134 (DILQQIMTIT…EGVAGPEKGG (80 aa)) are PBC-A. Phosphoserine is present on residues serine 136, serine 151, and serine 159. A PBC-B region spans residues 137-243 (AAAAAAAAAS…VMILRSRFLD (107 aa)). The segment at residues 244 to 306 (ARRKRRNFSK…NKRIRYKKNI (63 aa)) is a DNA-binding region (homeobox; TALE-type). Disordered regions lie at residues 327 to 347 (GGHSRTSSPTPPSSAGSGGSF) and 375 to 430 (LRHS…DTSN). Phosphoserine occurs at positions 330 and 395. The segment covering 409-418 (VTPSSVTSPT) has biased composition (polar residues).

This sequence belongs to the TALE/PBX homeobox family. Forms heterodimers with MEIS1 and heterotrimers with MEIS1 and HOXA9. Interacts with PBXIP1.

The protein localises to the nucleus. In terms of biological role, transcriptional activator that binds the sequence 5'-ATCAATCAA-3'. Activates transcription of PF4 in complex with MEIS1. The polypeptide is Pre-B-cell leukemia transcription factor 2 (Pbx2) (Mus musculus (Mouse)).